The following is a 319-amino-acid chain: GTP 3',8-cyclase (319 aa).

Residues 4 to 227 (KHGRKINYLR…VETDKSSTAL (224 aa)) form the Radical SAM core domain. Arginine 13 lines the GTP pocket. Residues cysteine 20 and cysteine 24 each contribute to the [4Fe-4S] cluster site. Tyrosine 26 contacts S-adenosyl-L-methionine. Cysteine 27 provides a ligand contact to [4Fe-4S] cluster. Arginine 63 is a GTP binding site. Residue glycine 67 coordinates S-adenosyl-L-methionine. Residue threonine 94 participates in GTP binding. Residue serine 118 participates in S-adenosyl-L-methionine binding. Lysine 155 lines the GTP pocket. Residue methionine 189 participates in S-adenosyl-L-methionine binding. Residues cysteine 249 and cysteine 252 each coordinate [4Fe-4S] cluster. GTP is bound at residue 254–256 (RVR). Residue cysteine 266 participates in [4Fe-4S] cluster binding.

Belongs to the radical SAM superfamily. MoaA family. In terms of assembly, monomer and homodimer. [4Fe-4S] cluster is required as a cofactor.

The catalysed reaction is GTP + AH2 + S-adenosyl-L-methionine = (8S)-3',8-cyclo-7,8-dihydroguanosine 5'-triphosphate + 5'-deoxyadenosine + L-methionine + A + H(+). It participates in cofactor biosynthesis; molybdopterin biosynthesis. Its function is as follows. Catalyzes the cyclization of GTP to (8S)-3',8-cyclo-7,8-dihydroguanosine 5'-triphosphate. The sequence is that of GTP 3',8-cyclase from Clostridium botulinum (strain Langeland / NCTC 10281 / Type F).